Consider the following 625-residue polypeptide: Probable inactive receptor kinase At5g16590 (625 aa).

The N-terminal stretch at 1 to 23 (MKNKTNLGLSVFFFFICLVSVTS) is a signal peptide. LRR repeat units follow at residues 88–111 (KLETLSFRFNALNGPLPPDFANLT), 112–134 (LLRYLYLQGNAFSGEIPSFLFTL), 136–158 (NIIRINLAQNNFLGRIPDNVNSA), 160–182 (RLATLYLQDNQLTGPIPEIKIKL), and 183–204 (QQFNVSSNQLNGSIPDPLSGMP). A helical transmembrane segment spans residues 246–266 (AIVGIVIGCFVLLLVLFLIVF). In terms of domain architecture, Protein kinase spans 343-613 (KASAEVLGKG…PEVTRLIEEV (271 aa)). Ser345 is subject to Phosphoserine. ATP contacts are provided by residues 349 to 357 (LGKGTFGSS) and Lys371. The residue at position 422 (Ser422) is a Phosphoserine. 2 positions are modified to phosphothreonine: Thr442 and Thr496. At Ser517 the chain carries Phosphoserine. Phosphothreonine is present on Thr593. 2 positions are modified to phosphoserine: Ser619 and Ser624.

It belongs to the protein kinase superfamily. Ser/Thr protein kinase family.

It localises to the cell membrane. In terms of biological role, might be involved in early recognition of growth promoting fungi. Appears to be specific for P.indica. The polypeptide is Probable inactive receptor kinase At5g16590 (Arabidopsis thaliana (Mouse-ear cress)).